The following is a 408-amino-acid chain: Serine/threonine-protein kinase UCNL (408 aa).

One can recognise a Protein kinase domain in the interval 21–341 (IKALKILGKG…AAEIKELAFF (321 aa)). Residues 27–35 (LGKGATGTV) and Lys54 contribute to the ATP site. Asp152 functions as the Proton acceptor in the catalytic mechanism. The AGC-kinase C-terminal domain occupies 342-408 (AGVRWDLLTE…CRKNDPFIEF (67 aa)).

This sequence belongs to the protein kinase superfamily. AGC Ser/Thr protein kinase family. As to expression, expressed in the epidermis and cortex of the transition zone of the root apex. Expressed in rosette leaves, stems, flowers and siliques.

The protein resides in the cytoplasm. The protein localises to the nucleus. The enzyme catalyses L-seryl-[protein] + ATP = O-phospho-L-seryl-[protein] + ADP + H(+). It carries out the reaction L-threonyl-[protein] + ATP = O-phospho-L-threonyl-[protein] + ADP + H(+). Its function is as follows. Regulates planar ovule integument development. The chain is Serine/threonine-protein kinase UCNL from Arabidopsis thaliana (Mouse-ear cress).